The following is a 189-amino-acid chain: Autophagy receptor ATG45 (189 aa).

The tract at residues 1–96 (MSNFLLVIPE…TNNILHFKDN (96 aa)) is binds glycogen. The tract at residues 97 to 189 (EASQLMDIPL…AKKVKTYWNK (93 aa)) is required for sequestration into autophagosomes. Position 107 is a phosphoserine (S107). Positions 127–130 (YVNL) match the ATG8 interaction motif (AIM) motif. Position 172 is a phosphoserine (S172). The may facilitate interactions with the autophagosome membrane stretch occupies residues 176–187 (LMCIAKKVKTYW).

In terms of assembly, interacts with ATG8.

Its subcellular location is the cytoplasm. It localises to the cytosol. It is found in the cytoplasmic vesicle. The protein resides in the autophagosome. Its function is as follows. Autophagy receptor for glycogen that facilitates the sequestration of glycogen assemblies into autophagosomes as part of bulk autophagy; the autophagy of glycogen (glycophagy) is stimulated during prolonged nitrogen starvation and during sporulation. This chain is Autophagy receptor ATG45, found in Saccharomyces cerevisiae (strain ATCC 204508 / S288c) (Baker's yeast).